Reading from the N-terminus, the 106-residue chain is Acylphosphatase-2 (106 aa).

The Acylphosphatase-like domain occupies S16–Y106. Catalysis depends on residues R31 and N49. Position 100 is a phosphoserine (S100).

It belongs to the acylphosphatase family.

It carries out the reaction an acyl phosphate + H2O = a carboxylate + phosphate + H(+). In Mus musculus (Mouse), this protein is Acylphosphatase-2 (Acyp2).